Consider the following 428-residue polypeptide: Tyrosine--tRNA ligase (428 aa).

L-tyrosine is bound at residue Tyr-41. Residues 46-55 carry the 'HIGH' region motif; that stretch reads PTADSLHLGH. L-tyrosine-binding residues include Tyr-179 and Gln-183. The 'KMSKS' region motif lies at 239–243; the sequence is KFGKT. Position 242 (Lys-242) interacts with ATP. Residues 361 to 418 enclose the S4 RNA-binding domain; it reads TDLMQALVDAELQPSRGQARKTIASNAVTINGEKQSDPEYIFNDEDRLFGRYTLLRRG.

It belongs to the class-I aminoacyl-tRNA synthetase family. TyrS type 1 subfamily. As to quaternary structure, homodimer.

The protein localises to the cytoplasm. It catalyses the reaction tRNA(Tyr) + L-tyrosine + ATP = L-tyrosyl-tRNA(Tyr) + AMP + diphosphate + H(+). In terms of biological role, catalyzes the attachment of tyrosine to tRNA(Tyr) in a two-step reaction: tyrosine is first activated by ATP to form Tyr-AMP and then transferred to the acceptor end of tRNA(Tyr). The protein is Tyrosine--tRNA ligase of Salmonella arizonae (strain ATCC BAA-731 / CDC346-86 / RSK2980).